A 238-amino-acid polypeptide reads, in one-letter code: 2-C-methyl-D-erythritol 4-phosphate cytidylyltransferase (238 aa).

This sequence belongs to the IspD/TarI cytidylyltransferase family. IspD subfamily.

The enzyme catalyses 2-C-methyl-D-erythritol 4-phosphate + CTP + H(+) = 4-CDP-2-C-methyl-D-erythritol + diphosphate. Its pathway is isoprenoid biosynthesis; isopentenyl diphosphate biosynthesis via DXP pathway; isopentenyl diphosphate from 1-deoxy-D-xylulose 5-phosphate: step 2/6. Catalyzes the formation of 4-diphosphocytidyl-2-C-methyl-D-erythritol from CTP and 2-C-methyl-D-erythritol 4-phosphate (MEP). In Acinetobacter baumannii (strain ACICU), this protein is 2-C-methyl-D-erythritol 4-phosphate cytidylyltransferase.